Here is a 166-residue protein sequence, read N- to C-terminus: Ureidoglycolate lyase (166 aa).

The protein belongs to the ureidoglycolate lyase family. Homodimer. Ni(2+) is required as a cofactor.

The catalysed reaction is (S)-ureidoglycolate = urea + glyoxylate. It functions in the pathway nitrogen metabolism; (S)-allantoin degradation. Catalyzes the catabolism of the allantoin degradation intermediate (S)-ureidoglycolate, generating urea and glyoxylate. Involved in the utilization of allantoin as nitrogen source. This chain is Ureidoglycolate lyase, found in Azotobacter vinelandii (strain DJ / ATCC BAA-1303).